A 146-amino-acid polypeptide reads, in one-letter code: Large ribosomal subunit protein uL15 (146 aa).

The interval 1–61 is disordered; it reads MELNSLKPAA…GGQMPMHRRL (61 aa). A compositionally biased stretch (basic residues) spans 30–39; the sequence is TATKGHKGQK.

It belongs to the universal ribosomal protein uL15 family. Part of the 50S ribosomal subunit.

In terms of biological role, binds to the 23S rRNA. This is Large ribosomal subunit protein uL15 from Geotalea uraniireducens (strain Rf4) (Geobacter uraniireducens).